Reading from the N-terminus, the 137-residue chain is MIWKRHLSLEELNATSSSTLVAHLGIVYTRLGDDTLEAEMPVDNRTHQPFGLLHGGASAALAETLGSMAGYLMTRDGQCVVGTELNATHHRAVSQGRVRGVCQPLHLGRQSQSWEIVVFDEQGRRCCTCRLSTMVLG.

Catalysis depends on E63, which acts as the Nucleophile or proton acceptor.

The protein belongs to the thioesterase PaaI family. Homotetramer. Dimer of dimers. Interacts specifically with the aryl carrier protein (ArCP) domain of EntB.

The protein localises to the cytoplasm. The protein operates within siderophore biosynthesis; enterobactin biosynthesis. In terms of biological role, required for optimal enterobactin synthesis. Acts as a proofreading enzyme that prevents EntB misacylation by hydrolyzing the thioester bound existing between EntB and wrongly charged molecules. This Enterobacter lignolyticus (strain SCF1) protein is Proofreading thioesterase EntH.